The sequence spans 468 residues: Trehalose-2-sulfate acyltransferase PapA2 (468 aa).

Belongs to the PapA acyltransferase family.

The enzyme catalyses 2-O-sulfo-alpha,alpha-trehalose + hexadecanoyl-CoA = 2-O-sulfo-2'-O-hexadecanoyl-alpha,alpha-trehalose + CoA. Its function is as follows. Required for the biosynthesis of sulfolipid-1 (SL-1), a major mycobacterial cell wall lipid. Catalyzes the acylation of trehalose-2-sulfate by adding the palmitoyl group at the 2'-position to yield the intermediate trehalose-2-sulfate-2'-palmitate (SL659). This chain is Trehalose-2-sulfate acyltransferase PapA2 (papA2), found in Mycobacterium bovis (strain ATCC BAA-935 / AF2122/97).